The chain runs to 97 residues: Protein RnfH (97 aa).

Belongs to the UPF0125 (RnfH) family.

This is Protein RnfH from Paramagnetospirillum magneticum (strain ATCC 700264 / AMB-1) (Magnetospirillum magneticum).